Reading from the N-terminus, the 451-residue chain is Secreted RxLR effector protein 111 (451 aa).

Positions 1 to 19 (MRGTLATALLLVASCRIAA) are cleaved as a signal peptide. Positions 48–69 (RFLRDNREQRVALALTAANESR) match the RxLR-dEER motif. A glycan (N-linked (GlcNAc...) asparagine) is linked at N66. 2 stretches are compositionally biased toward polar residues: residues 175–184 (RKTLSKTQFK) and 413–426 (SPAS…QRTG). Disordered regions lie at residues 175 to 194 (RKTL…STKR) and 404 to 451 (IPLQ…NKHA). The span at 437–451 (PERDSFRHIESNKHA) shows a compositional bias: basic and acidic residues.

Belongs to the RxLR effector family.

It localises to the secreted. The protein localises to the host nucleus. Its function is as follows. Secreted effector that acts as an elicitor that induces cell death in host plant cells. The polypeptide is Secreted RxLR effector protein 111 (Plasmopara viticola (Downy mildew of grapevine)).